A 124-amino-acid chain; its full sequence is UPF0102 protein HEAR0176 (124 aa).

It belongs to the UPF0102 family.

This is UPF0102 protein HEAR0176 from Herminiimonas arsenicoxydans.